Reading from the N-terminus, the 699-residue chain is Ubiquitin-like modifier-activating enzyme atg7 (699 aa).

Residues 370–375 (GAGTLG) carry the GXGXXG motif motif. The active-site Glycyl thioester intermediate is the C550. Positions 680-699 (MQWSEDEEGMDEEEGEGELI) are disordered. Acidic residues predominate over residues 682–699 (WSEDEEGMDEEEGEGELI).

This sequence belongs to the ATG7 family. In terms of assembly, homodimer.

It is found in the cytoplasm. The protein resides in the preautophagosomal structure. Functionally, E1-like activating enzyme involved in the 2 ubiquitin-like systems required for cytoplasm to vacuole transport (Cvt) and autophagy. Activates atg12 for its conjugation with apg-4/atg5 and apg-6/atg8 for its conjugation with phosphatidylethanolamine. Both systems are needed for the apg-6/atg8 association to Cvt vesicles and autophagosomes membranes. Autophagy is essential for maintenance of amino acid levels and protein synthesis under nitrogen starvation. Required for selective autophagic degradation of the nucleus (nucleophagy) as well as for mitophagy which contributes to regulate mitochondrial quantity and quality by eliminating the mitochondria to a basal level to fulfill cellular energy requirements and preventing excess ROS production. Plays a role in the regulation of filamentous growth and chronological longevity. The sequence is that of Ubiquitin-like modifier-activating enzyme atg7 (apg-5) from Neurospora crassa (strain ATCC 24698 / 74-OR23-1A / CBS 708.71 / DSM 1257 / FGSC 987).